The primary structure comprises 349 residues: ATPase GET3 (349 aa).

26–33 (KGGVGKTT) provides a ligand contact to ATP. Residue D57 is part of the active site. Residues E242 and N269 each contribute to the ATP site. Zn(2+)-binding residues include C281 and C284.

The protein belongs to the arsA ATPase family. In terms of assembly, homodimer. Component of the Golgi to ER traffic (GET) complex, which is composed of GET1, GET2 and GET3. Within the complex, GET1 and GET2 form a heterotetramer which is stabilized by phosphatidylinositol binding and which binds to the GET3 homodimer. Interacts with the chloride channel protein GEF1.

It localises to the cytoplasm. Its subcellular location is the endoplasmic reticulum. The protein localises to the golgi apparatus. Its function is as follows. ATPase required for the post-translational delivery of tail-anchored (TA) proteins to the endoplasmic reticulum. Recognizes and selectively binds the transmembrane domain of TA proteins in the cytosol. This complex then targets to the endoplasmic reticulum by membrane-bound receptors GET1 and GET2, where the tail-anchored protein is released for insertion. This process is regulated by ATP binding and hydrolysis. ATP binding drives the homodimer towards the closed dimer state, facilitating recognition of newly synthesized TA membrane proteins. ATP hydrolysis is required for insertion. Subsequently, the homodimer reverts towards the open dimer state, lowering its affinity for the GET1-GET2 receptor, and returning it to the cytosol to initiate a new round of targeting. Cooperates with the HDEL receptor ERD2 to mediate the ATP-dependent retrieval of resident ER proteins that contain a C-terminal H-D-E-L retention signal from the Golgi to the ER. Involved in low-level resistance to the oxyanions arsenite and arsenate, and in heat tolerance. This Candida tropicalis (strain ATCC MYA-3404 / T1) (Yeast) protein is ATPase GET3.